We begin with the raw amino-acid sequence, 460 residues long: Ammonium transporter Rh type B-A (460 aa).

The Cytoplasmic segment spans residues 1–10 (MTGYSTNMRI). A helical membrane pass occupies residues 11 to 31 (KLPLFCLILQFITIILFAVFV). Residues 32-62 (RYDHESDARGWHDELKNHSTANADNDFYFRY) lie on the Extracellular side of the membrane. N-linked (GlcNAc...) asparagine glycosylation occurs at Asn48. The chain crosses the membrane as a helical span at residues 63-83 (PSFQDVHVMIFIGFGFLMTFL). Residues 84-87 (KRYG) lie on the Cytoplasmic side of the membrane. Residues 88 to 108 (FSSVAFNFLIAAFGLQWSTLI) traverse the membrane as a helical segment. At 109 to 125 (QGFFHGFHDGKIHVGIE) the chain is on the extracellular side. A helical membrane pass occupies residues 126 to 146 (SMINADFCTGAVLISFGAVLG). The Cytoplasmic segment spans residues 147-150 (KTSP). A helical membrane pass occupies residues 151–171 (VQLIVMTLIEVTLFGINEYII). Residues 172–179 (LNIVGAKD) are Extracellular-facing. Residues 180 to 202 (AGGSMTIHTFGAYFGLIVSRVLY) form a helical membrane-spanning segment. Residues 203-220 (RADLDKSRQREGSVYHSD) are Cytoplasmic-facing. Residues 221–241 (LFAMIGTIYLWMFWPSFNSAV) form a helical membrane-spanning segment. Residues 242–252 (TAHGDDQHRTV) are Extracellular-facing. The chain crosses the membrane as a helical span at residues 253 to 273 (LNTYYSLAACTLATFGFSALL). Residues 274–283 (NGEGKLDMVH) are Cytoplasmic-facing. Residues 284–304 (IQNAALAGGVAVGTSGEMMLT) form a helical membrane-spanning segment. Position 305 (Pro305) is a topological domain, extracellular. Residues 306–326 (FGAMIAGTLAGIVSVLGYKYL) form a helical membrane-spanning segment. At 327–347 (TPVLDSKLKIQDTCGVHNLHG) the chain is on the cytoplasmic side. The chain crosses the membrane as a helical span at residues 348-368 (MPGILGAVIGAIVALFATADI). The Extracellular segment spans residues 369–394 (YGDGMDDVFPMIFDGSRTAKQQSLYQ). A helical membrane pass occupies residues 395 to 415 (FLALLVALGFAIVGGTVVGFI). Residues 416-460 (LKLPLFGTPSDAECFEDAVYWEVPGGEGHQQLTVVVNNEDPDTQA) are Cytoplasmic-facing.

The protein belongs to the ammonium transporter (TC 2.A.49) family. Rh subfamily.

The protein localises to the basolateral cell membrane. The protein resides in the cytoplasmic vesicle membrane. Its function is as follows. Functions as a specific ammonium transporter. This chain is Ammonium transporter Rh type B-A (rhbg-a), found in Xenopus laevis (African clawed frog).